The primary structure comprises 473 residues: tRNA-2-methylthio-N(6)-dimethylallyladenosine synthase (473 aa).

Residues 1–21 (MTQDSALLQAPEAIPSESLRD) form a disordered region. Positions 26 to 146 (RKVFIKTYGC…LPEALRRAKQ (121 aa)) constitute an MTTase N-terminal domain. [4Fe-4S] cluster contacts are provided by Cys-35, Cys-71, Cys-109, Cys-187, Cys-191, and Cys-194. The Radical SAM core domain maps to 173–405 (RARGVTAFLT…QMLLLKQQQE (233 aa)). One can recognise a TRAM domain in the interval 408 to 470 (ESCVGKEIDL…TNSLFAEHAE (63 aa)).

This sequence belongs to the methylthiotransferase family. MiaB subfamily. As to quaternary structure, monomer. Requires [4Fe-4S] cluster as cofactor.

It is found in the cytoplasm. The enzyme catalyses N(6)-dimethylallyladenosine(37) in tRNA + (sulfur carrier)-SH + AH2 + 2 S-adenosyl-L-methionine = 2-methylsulfanyl-N(6)-dimethylallyladenosine(37) in tRNA + (sulfur carrier)-H + 5'-deoxyadenosine + L-methionine + A + S-adenosyl-L-homocysteine + 2 H(+). In terms of biological role, catalyzes the methylthiolation of N6-(dimethylallyl)adenosine (i(6)A), leading to the formation of 2-methylthio-N6-(dimethylallyl)adenosine (ms(2)i(6)A) at position 37 in tRNAs that read codons beginning with uridine. The protein is tRNA-2-methylthio-N(6)-dimethylallyladenosine synthase of Rhizobium johnstonii (strain DSM 114642 / LMG 32736 / 3841) (Rhizobium leguminosarum bv. viciae).